A 247-amino-acid chain; its full sequence is C-type lectin domain family 7 member A (247 aa).

The Cytoplasmic segment spans residues 1–44 (MEYQSSVENLDEDGYTQLDFSSRNITRRSVVSEKGLCAASSHWR). Positions 15–18 (YTQL) match the ITAM-like motif. Residues 45–65 (LIAVTLGILCSVMLVITVVLS) form a helical; Signal-anchor for type II membrane protein membrane-spanning segment. Over 66-247 (TSGIWRSSSG…YSICEKKLSV (182 aa)) the chain is Extracellular. The segment covering 81 to 101 (SDSFPSRNKDNQSQPTQSSLE) has biased composition (polar residues). The tract at residues 81-103 (SDSFPSRNKDNQSQPTQSSLEDS) is disordered. The N-linked (GlcNAc...) asparagine glycan is linked to Asn-91. Disulfide bonds link Cys-120-Cys-131, Cys-148-Cys-241, and Cys-220-Cys-233. One can recognise a C-type lectin domain in the interval 127-242 (HEDSCYLFST…CSVHSYSICE (116 aa)). 146–153 (RQCFQLGS) contributes to the (1,3-beta-D-glucosyl)n binding site. The a divalent metal cation site is built by Lys-157, Asp-159, and Glu-163. (1,3-beta-D-glucosyl)n is bound at residue Glu-195. Glu-242 is an a divalent metal cation binding site.

In terms of assembly, homodimer. Interacts with SYK; participates in leukocyte activation in presence of fungal pathogens. Interacts with CD37; this interaction controls CLEC7A-mediated IL-6 production. In terms of processing, phosphorylated on tyrosine residues in response to beta-glucan binding. As to expression, detected in bone marrow, monocytes, macrophages, dendritic cells and natural killer cells.

It is found in the cell membrane. Its function is as follows. Lectin that functions as a pattern recognizing receptor (PRR) specific for beta-1,3-linked and beta-1,6-linked glucans, which constitute cell wall constituents from pathogenic bacteria and fungi. Necessary for the TLR2-mediated inflammatory response and activation of NF-kappa-B: upon beta-glucan binding, recruits SYK via its ITAM motif and promotes a signaling cascade that activates some CARD domain-BCL10-MALT1 (CBM) signalosomes, leading to the activation of NF-kappa-B and MAP kinase p38 (MAPK11, MAPK12, MAPK13 and/or MAPK14) pathways which stimulate expression of genes encoding pro-inflammatory cytokines and chemokines. Enhances cytokine production in macrophages and dendritic cells. Mediates production of reactive oxygen species in the cell. Mediates phagocytosis of C.albicans conidia. Binds T-cells in a way that does not involve their surface glycans and plays a role in T-cell activation. Stimulates T-cell proliferation. Induces phosphorylation of SCIMP after binding beta-glucans. The chain is C-type lectin domain family 7 member A (CLEC7A) from Bos taurus (Bovine).